A 231-amino-acid chain; its full sequence is Large ribosomal subunit protein uL1 (231 aa).

It belongs to the universal ribosomal protein uL1 family. In terms of assembly, part of the 50S ribosomal subunit.

Functionally, binds directly to 23S rRNA. The L1 stalk is quite mobile in the ribosome, and is involved in E site tRNA release. Its function is as follows. Protein L1 is also a translational repressor protein, it controls the translation of the L11 operon by binding to its mRNA. In Moorella thermoacetica (strain ATCC 39073 / JCM 9320), this protein is Large ribosomal subunit protein uL1.